The chain runs to 794 residues: Interphotoreceptor matrix proteoglycan 1 (794 aa).

The N-terminal stretch at methionine 1–glycine 20 is a signal peptide. Positions methionine 202–proline 213 are enriched in polar residues. 3 disordered regions span residues methionine 202 to threonine 221, lysine 314 to threonine 355, and serine 413 to serine 449. Positions leucine 236–serine 357 constitute an SEA 1 domain. Residues asparagine 332–glutamate 351 show a composition bias toward basic and acidic residues. O-linked (GalNAc...) threonine glycans are attached at residues threonine 425 and threonine 439. Serine 443 carries O-linked (GalNAc...) serine glycosylation. O-linked (GalNAc...) threonine glycans are attached at residues threonine 448 and threonine 450. One can recognise an SEA 2 domain in the interval arginine 579 to glutamine 692. Asparagine 624 carries an N-linked (GlcNAc...) asparagine glycan. Positions lysine 629–arginine 637 match the Heparin- and hyaluronan-binding motif. A glycan (N-linked (GlcNAc...) asparagine) is linked at asparagine 656.

Post-translationally, highly glycosylated (N- and O-linked carbohydrates and sialic acid).

The protein resides in the cell projection. The protein localises to the cilium. Its subcellular location is the photoreceptor outer segment. It localises to the secreted. It is found in the extracellular space. The protein resides in the extracellular matrix. The protein localises to the interphotoreceptor matrix. Its subcellular location is the photoreceptor inner segment. Its function is as follows. Chondroitin sulfate-, heparin- and hyaluronan-binding protein. May serve to form a basic macromolecular scaffold comprising the insoluble interphotoreceptor matrix. In Bos taurus (Bovine), this protein is Interphotoreceptor matrix proteoglycan 1 (IMPG1).